An 86-amino-acid chain; its full sequence is Cell division topological specificity factor (86 aa).

This sequence belongs to the MinE family.

Prevents the cell division inhibition by proteins MinC and MinD at internal division sites while permitting inhibition at polar sites. This ensures cell division at the proper site by restricting the formation of a division septum at the midpoint of the long axis of the cell. The protein is Cell division topological specificity factor of Shewanella piezotolerans (strain WP3 / JCM 13877).